The chain runs to 246 residues: Alpha-tubulin N-acetyltransferase (246 aa).

Residues 21–202 (LTLVPDGVSR…NNFVVFHSFF (182 aa)) enclose the N-acetyltransferase domain. Residues 135–148 (FYVDESCQRQGYGK) and 172–181 (SNKLLGFLRK) contribute to the acetyl-CoA site.

This sequence belongs to the acetyltransferase ATAT1 family.

It catalyses the reaction L-lysyl-[alpha-tubulin] + acetyl-CoA = N(6)-acetyl-L-lysyl-[alpha-tubulin] + CoA + H(+). Specifically acetylates 'Lys-40' in alpha-tubulin on the lumenal side of microtubules. Promotes microtubule destabilization and accelerates microtubule dynamics; this activity may be independent of acetylation activity. Acetylates alpha-tubulin with a slow enzymatic rate, due to a catalytic site that is not optimized for acetyl transfer. Enters the microtubule through each end and diffuses quickly throughout the lumen of microtubules. Acetylates only long/old microtubules because of its slow acetylation rate since it does not have time to act on dynamically unstable microtubules before the enzyme is released. The sequence is that of Alpha-tubulin N-acetyltransferase from Leishmania infantum.